The sequence spans 137 residues: Proofreading thioesterase EntH (137 aa).

Glutamate 63 functions as the Nucleophile or proton acceptor in the catalytic mechanism.

It belongs to the thioesterase PaaI family. In terms of assembly, homotetramer. Dimer of dimers. Interacts specifically with the aryl carrier protein (ArCP) domain of EntB.

The protein resides in the cytoplasm. Its pathway is siderophore biosynthesis; enterobactin biosynthesis. In terms of biological role, required for optimal enterobactin synthesis. Acts as a proofreading enzyme that prevents EntB misacylation by hydrolyzing the thioester bound existing between EntB and wrongly charged molecules. The polypeptide is Proofreading thioesterase EntH (Shigella sonnei (strain Ss046)).